Reading from the N-terminus, the 177-residue chain is Dihydrofolate reductase type 9 (177 aa).

In terms of domain architecture, DHFR spans 3–167 (SLNMIVAVNK…TKLIFQIWIN (165 aa)).

This sequence belongs to the dihydrofolate reductase family. Homodimer.

The enzyme catalyses (6S)-5,6,7,8-tetrahydrofolate + NADP(+) = 7,8-dihydrofolate + NADPH + H(+). It functions in the pathway cofactor biosynthesis; tetrahydrofolate biosynthesis; 5,6,7,8-tetrahydrofolate from 7,8-dihydrofolate: step 1/1. Key enzyme in folate metabolism. Catalyzes an essential reaction for de novo glycine and purine synthesis, and for DNA precursor synthesis. This is Dihydrofolate reductase type 9 (dhfrIX) from Escherichia coli.